Reading from the N-terminus, the 271-residue chain is Tryptophan synthase alpha chain (271 aa).

Catalysis depends on proton acceptor residues glutamate 49 and aspartate 60.

The protein belongs to the TrpA family. As to quaternary structure, tetramer of two alpha and two beta chains.

It catalyses the reaction (1S,2R)-1-C-(indol-3-yl)glycerol 3-phosphate + L-serine = D-glyceraldehyde 3-phosphate + L-tryptophan + H2O. It participates in amino-acid biosynthesis; L-tryptophan biosynthesis; L-tryptophan from chorismate: step 5/5. In terms of biological role, the alpha subunit is responsible for the aldol cleavage of indoleglycerol phosphate to indole and glyceraldehyde 3-phosphate. In Burkholderia cenocepacia (strain HI2424), this protein is Tryptophan synthase alpha chain.